Reading from the N-terminus, the 273-residue chain is Formamidopyrimidine-DNA glycosylase (273 aa).

Pro-2 serves as the catalytic Schiff-base intermediate with DNA. Glu-3 functions as the Proton donor in the catalytic mechanism. The Proton donor; for beta-elimination activity role is filled by Lys-58. Positions 92, 111, and 153 each coordinate DNA. The FPG-type zinc finger occupies 238 to 272 (KVYGREGQSCLSCSSTIIKIKHSGRSTFYCKTCQY). Arg-262 serves as the catalytic Proton donor; for delta-elimination activity.

This sequence belongs to the FPG family. In terms of assembly, monomer. Requires Zn(2+) as cofactor.

It catalyses the reaction Hydrolysis of DNA containing ring-opened 7-methylguanine residues, releasing 2,6-diamino-4-hydroxy-5-(N-methyl)formamidopyrimidine.. The enzyme catalyses 2'-deoxyribonucleotide-(2'-deoxyribose 5'-phosphate)-2'-deoxyribonucleotide-DNA = a 3'-end 2'-deoxyribonucleotide-(2,3-dehydro-2,3-deoxyribose 5'-phosphate)-DNA + a 5'-end 5'-phospho-2'-deoxyribonucleoside-DNA + H(+). Its function is as follows. Involved in base excision repair of DNA damaged by oxidation or by mutagenic agents. Acts as a DNA glycosylase that recognizes and removes damaged bases. Has a preference for oxidized purines, such as 7,8-dihydro-8-oxoguanine (8-oxoG). Has AP (apurinic/apyrimidinic) lyase activity and introduces nicks in the DNA strand. Cleaves the DNA backbone by beta-delta elimination to generate a single-strand break at the site of the removed base with both 3'- and 5'-phosphates. The polypeptide is Formamidopyrimidine-DNA glycosylase (Rickettsia peacockii (strain Rustic)).